A 134-amino-acid chain; its full sequence is Small ribosomal subunit protein uS11 (134 aa).

The protein belongs to the universal ribosomal protein uS11 family. As to quaternary structure, part of the 30S ribosomal subunit. Interacts with proteins S7 and S18. Binds to IF-3.

In terms of biological role, located on the platform of the 30S subunit, it bridges several disparate RNA helices of the 16S rRNA. Forms part of the Shine-Dalgarno cleft in the 70S ribosome. The sequence is that of Small ribosomal subunit protein uS11 from Acidovorax ebreus (strain TPSY) (Diaphorobacter sp. (strain TPSY)).